Here is a 365-residue protein sequence, read N- to C-terminus: Alanine racemase (365 aa).

Lys35 functions as the Proton acceptor; specific for D-alanine in the catalytic mechanism. Lys35 bears the N6-(pyridoxal phosphate)lysine mark. Arg130 is a substrate binding site. The Proton acceptor; specific for L-alanine role is filled by Tyr256. Met304 provides a ligand contact to substrate.

It belongs to the alanine racemase family. It depends on pyridoxal 5'-phosphate as a cofactor.

It carries out the reaction L-alanine = D-alanine. The protein operates within amino-acid biosynthesis; D-alanine biosynthesis; D-alanine from L-alanine: step 1/1. Catalyzes the interconversion of L-alanine and D-alanine. May also act on other amino acids. The sequence is that of Alanine racemase (alr) from Polaromonas naphthalenivorans (strain CJ2).